Consider the following 638-residue polypeptide: Actin-regulating kinase 1 (638 aa).

In terms of domain architecture, Protein kinase spans 22–298 (VEIIKYLTSG…VYQLLKRISI (277 aa)). Residues 28–36 (LTSGGFAQV) and Lys56 contribute to the ATP site. The active-site Proton acceptor is Asp159. Ser478 is modified (phosphoserine). Positions 482–515 (YSTRGNIKKNQSVKESLTSSSLPGTSFTPTSTKV) are enriched in polar residues. The interval 482–518 (YSTRGNIKKNQSVKESLTSSSLPGTSFTPTSTKVNLK) is disordered. 2 positions are modified to phosphoserine: Ser522 and Ser535. A disordered region spans residues 569–638 (SEESFNARKM…LAGRKLSLDK (70 aa)). The segment covering 582 to 593 (KLHEKGEIDKPT) has biased composition (basic and acidic residues). Residues 602–615 (SKDKKTKPTPPPKP) form an interaction with SH3 domain of ABP1 region.

It belongs to the protein kinase superfamily. Ser/Thr protein kinase family. As to quaternary structure, interacts with ABP1, which is required for proper actin patch localization.

It localises to the cytoplasm. It is found in the cytoskeleton. The protein resides in the actin patch. The catalysed reaction is L-seryl-[protein] + ATP = O-phospho-L-seryl-[protein] + ADP + H(+). It carries out the reaction L-threonyl-[protein] + ATP = O-phospho-L-threonyl-[protein] + ADP + H(+). Its function is as follows. Involved in regulation of actin cytoskeleton organization and endocytosis. This is Actin-regulating kinase 1 (ARK1) from Saccharomyces cerevisiae (strain ATCC 204508 / S288c) (Baker's yeast).